A 470-amino-acid polypeptide reads, in one-letter code: Cannabinoid receptor 1 (470 aa).

Over 1–121 (MKSILDGLAD…TPSQQLVIAA (121 aa)) the chain is Extracellular. The required for mitochondrial localization stretch occupies residues 2 to 23 (KSILDGLADTTFRTITTDLLYL). N-linked (GlcNAc...) asparagine glycosylation is found at Asn78 and Asn84. Residues 122-142 (LSIILGTFTVLENMLVLVVIV) traverse the membrane as a helical segment. Residues 143-154 (QSRSLRCRPSYH) lie on the Cytoplasmic side of the membrane. The helical transmembrane segment at 155–175 (FIGSLAVADLLGSVIFVYSFV) threads the bilayer. Over 176–187 (DFHVFHRKDSPN) the chain is Extracellular. The chain crosses the membrane as a helical span at residues 188-208 (VFLFKLGGVTASFTASVGSLF). The Cytoplasmic portion of the chain corresponds to 209–232 (LTAIDRYISIHRPMSYKRIVTRTK). Residues 233 to 253 (AVIAFCMMWTIAIVIAVLPLF) form a helical membrane-spanning segment. Topologically, residues 254 to 277 (GWNCIKLRSVCSDIFPLIDETYLM) are extracellular. The chain crosses the membrane as a helical span at residues 278-298 (FWIGVTSVLLLFIVYAYMYIL). At 299 to 344 (WKAHNHAVRMLQRGTQKSIIVHTSEDGKVHITRPDQTRMDIRLAKT) the chain is on the cytoplasmic side. Residues 345–365 (LVLILVVLIICWGPLMAIMVY) form a helical membrane-spanning segment. At 366–377 (DVFGKINKTIKT) the chain is on the extracellular side. A glycan (N-linked (GlcNAc...) asparagine) is linked at Asn372. Residues 378–398 (VFAFCSVLCLLNSTVNPIIYA) traverse the membrane as a helical segment. Residues 399–470 (LRSKDLRNAF…VSTDTSAEAV (72 aa)) lie on the Cytoplasmic side of the membrane. A lipid anchor (S-palmitoyl cysteine) is attached at Cys415.

It belongs to the G-protein coupled receptor 1 family. Palmitoylation at Cys-415 is important for recruitment at both plasma membrane and lipid rafts and association with G protein alpha subunits. In terms of tissue distribution, expressed in neurons, especially in the olfactory bulbs, telencephalic pallium, and hypothalamus and also in the midbrain and hindbrain (in the mesencephalic tegmentum and dorsolateral rhombencephalon). Expressed also in the spinal cord.

The protein localises to the cell membrane. It localises to the mitochondrion outer membrane. The protein resides in the cell projection. It is found in the axon. Its subcellular location is the presynapse. G-protein coupled receptor for cannabinoids. Mediates many cannabinoid-induced effects in the central nervous system (CNS), as well as in peripheral tissues. Regulates cellular respiration and energy production in response to cannabinoids. Signaling typically involves reduction in cyclic AMP. The polypeptide is Cannabinoid receptor 1 (cnr1) (Xenopus laevis (African clawed frog)).